The chain runs to 735 residues: Catalase-peroxidase (735 aa).

Residues 1–31 (MENNTNPISGQGKCPFSGGAAKQSAGAGTRN) are disordered. Low complexity predominate over residues 17–28 (SGGAAKQSAGAG). The tryptophyl-tyrosyl-methioninium (Trp-Tyr) (with M-252) cross-link spans 103-226 (WHSAGTYRVA…LAAVQMGLIY (124 aa)). His-104 acts as the Proton acceptor in catalysis. Residues 226 to 252 (YVNPEGPNGNPDPLASARDIRETFARM) constitute a cross-link (tryptophyl-tyrosyl-methioninium (Tyr-Met) (with W-103)). His-267 serves as a coordination point for heme b. The segment at 352 to 371 (KPKNGAGAGTVPDAHNSSKS) is disordered.

Belongs to the peroxidase family. Peroxidase/catalase subfamily. In terms of assembly, homodimer or homotetramer. The cofactor is heme b. In terms of processing, formation of the three residue Trp-Tyr-Met cross-link is important for the catalase, but not the peroxidase activity of the enzyme.

The enzyme catalyses H2O2 + AH2 = A + 2 H2O. It carries out the reaction 2 H2O2 = O2 + 2 H2O. Its function is as follows. Bifunctional enzyme with both catalase and broad-spectrum peroxidase activity. In Flavobacterium psychrophilum (strain ATCC 49511 / DSM 21280 / CIP 103535 / JIP02/86), this protein is Catalase-peroxidase.